The chain runs to 314 residues: Homoserine kinase (314 aa).

97 to 107 (PPARGMGSSAT) contacts ATP.

Belongs to the GHMP kinase family. Homoserine kinase subfamily.

It is found in the cytoplasm. It catalyses the reaction L-homoserine + ATP = O-phospho-L-homoserine + ADP + H(+). It functions in the pathway amino-acid biosynthesis; L-threonine biosynthesis; L-threonine from L-aspartate: step 4/5. Catalyzes the ATP-dependent phosphorylation of L-homoserine to L-homoserine phosphate. The chain is Homoserine kinase from Synechococcus sp. (strain RCC307).